A 484-amino-acid polypeptide reads, in one-letter code: MKLIVKVFPEITIKSRPVRTKFIRQLAKNIRTVLRDLDPAVVVNGVWDNLELETRVTDPKALKEMGERLTCMPGIAHFLQIDEYPLGDFDDITEKCKQHYGDALAGKIFSVRCKRAGKHAFSSMDVEKYVGSKLRRECGAAGIDLKQPEIEVRIEVRDKRLFVIHSQHNGIGGYPLGALEQTLVLMSGGFDSTVAAYQILRRGLMTHFCFFNLGGRAHELGVMEVAHFIWKKYGSSQRVLFVSVPFEEVLGEILGKVDDSHMGVVLKRMMLRAASSIAERLHIDALVTGEAISQVSSQTLPNLSVIDCVTDKLVLRPLIVAHKQDIIDTADQIGTGDFARHMPEYCGVISVNPKTAAKRGRVEHEEQEFDMAVLERALANARLVPIDRVIDELGQDLQIEEVSEALAGQIVIDIRHPDAAEDDPLELAGIEVQTMPFYAVNARFKELDPTRQYLLYCDKGVMSRLHAHHLLSEGHANVRVYRPS.

The THUMP domain occupies 63–167; the sequence is KEMGERLTCM…DKRLFVIHSQ (105 aa). ATP is bound by residues 185 to 186, K267, G289, and Q298; that span reads LM. C346 and C457 are oxidised to a cystine. Residues 405 to 483 form the Rhodanese domain; that stretch reads ALAGQIVIDI…GHANVRVYRP (79 aa). C457 serves as the catalytic Cysteine persulfide intermediate.

Belongs to the ThiI family.

It localises to the cytoplasm. The enzyme catalyses [ThiI sulfur-carrier protein]-S-sulfanyl-L-cysteine + a uridine in tRNA + 2 reduced [2Fe-2S]-[ferredoxin] + ATP + H(+) = [ThiI sulfur-carrier protein]-L-cysteine + a 4-thiouridine in tRNA + 2 oxidized [2Fe-2S]-[ferredoxin] + AMP + diphosphate. The catalysed reaction is [ThiS sulfur-carrier protein]-C-terminal Gly-Gly-AMP + S-sulfanyl-L-cysteinyl-[cysteine desulfurase] + AH2 = [ThiS sulfur-carrier protein]-C-terminal-Gly-aminoethanethioate + L-cysteinyl-[cysteine desulfurase] + A + AMP + 2 H(+). Its pathway is cofactor biosynthesis; thiamine diphosphate biosynthesis. Functionally, catalyzes the ATP-dependent transfer of a sulfur to tRNA to produce 4-thiouridine in position 8 of tRNAs, which functions as a near-UV photosensor. Also catalyzes the transfer of sulfur to the sulfur carrier protein ThiS, forming ThiS-thiocarboxylate. This is a step in the synthesis of thiazole, in the thiamine biosynthesis pathway. The sulfur is donated as persulfide by IscS. The protein is tRNA sulfurtransferase of Pseudomonas fluorescens (strain Pf0-1).